Consider the following 287-residue polypeptide: Inorganic pyrophosphatase (287 aa).

Arg-79 lines the diphosphate pocket. 3 residues coordinate Mg(2+): Asp-116, Asp-121, and Asp-153. Residues 244–258 (NSTLGNSDSVDSSKL) are compositionally biased toward polar residues. Residues 244-269 (NSTLGNSDSVDSSKLASIPRGENLPP) form a disordered region.

Belongs to the PPase family. Requires Mg(2+) as cofactor.

Its subcellular location is the cytoplasm. The enzyme catalyses diphosphate + H2O = 2 phosphate + H(+). In terms of biological role, involved in osmoadaptation. This is Inorganic pyrophosphatase (ipp1) from Emericella nidulans (strain FGSC A4 / ATCC 38163 / CBS 112.46 / NRRL 194 / M139) (Aspergillus nidulans).